The chain runs to 42 residues: EIRLPEPFRFPSPTVPKPIDIDPILPHPWSPRQTYPIIARRS.

As to expression, hemolymph.

It localises to the secreted. Its function is as follows. Antimicrobial protein. Has antibacterial activity against the Gram-positive bacterium M.luteus (MIC=8.6 uM). Lacks antibacterial activity against the Gram-positive bacteria B.circulans, L.monocytogenes, S.aureus, and S.lutea, and the Gram-negative bacteria E.coli D31, E.coli ATCC 25922, and S.typhimurium. Lacks antifungal activity against S.cerevisiae, P.pastoris, Z.marxianus, C.albicans, C.fructus, C.wickerhamii, A.niger, F.oxysporum, and T.harizianum. The polypeptide is Proline-rich antimicrobial peptide 2 (Galleria mellonella (Greater wax moth)).